The chain runs to 444 residues: MAGGMKVAVSPAVGPGPWGSGVGGGGTVRLLLILSGCLVYGTAEIDVNVVMLQESQVCEKRASQQFCYTNVLIPKWHDIWTRIQIRVNSSKLVRVTQVENEQKLKELEQFSIWNFFSSFLKEKLNDTYVNVGLYSTKTCLKVEIIEKDTKYSVIVIRRFDPKLFLVFLLGLMLFFCGDLLSRSQIFYYSTGMSVGIVASLLIIIFILSKFMPKKSPIYVILVGGWSFSLYLIQLVFKNLQEIWRCYWQYLLSYILTVGFMSFAVCYKYGPLENERSIDLLTWTLQLMGLCFMYSGIQIPHIALAIIIIALCTKNLEYPIQWLYITYRKVCKAAEKPVPPRLLTEEEYRIQGEVETRKALEELREFCNSPDCSAWKTVSRIQSPKRFADFVEGSSHLTPNEVSVHEQEYGLGSIIAQDEIYEEASSEEEDSYSRCPAITQNNFLT.

Positions 1–43 (MAGGMKVAVSPAVGPGPWGSGVGGGGTVRLLLILSGCLVYGTA) are cleaved as a signal peptide. N-linked (GlcNAc...) asparagine glycosylation is present at Asn-125. 5 consecutive transmembrane segments (helical) span residues 161–181 (PKLF…DLLS), 186–206 (FYYS…IIFI), 216–236 (PIYV…QLVF), 245–265 (CYWQ…FAVC), and 289–309 (LCFM…IIIA). Residues 186–297 (FYYSTGMSVG…GLCFMYSGIQ (112 aa)) form an a; required for its colocalization with lamins at the nuclear envelope region. The b; required for interaction with RAN-GTP stretch occupies residues 336-405 (PVPPRLLTEE…LTPNEVSVHE (70 aa)). The required for nuclear localization stretch occupies residues 336–444 (PVPPRLLTEE…PAITQNNFLT (109 aa)). Residues Ser-368, Ser-424, and Ser-425 each carry the phosphoserine modification.

Belongs to the NEMP family. As to quaternary structure, homooligomer. Interacts with RAN-GTP. Interacts with EMD. Post-translationally, phosphorylation may regulate its interaction with RAN-GTP.

It is found in the nucleus inner membrane. Its subcellular location is the nucleus envelope. Functionally, together with EMD, contributes to nuclear envelope stiffness in germ cells. Required for female fertility. Essential for normal erythropoiesis. Required for efficient nuclear envelope opening and enucleation during the late stages of erythroblast maturation. The chain is Nuclear envelope integral membrane protein 1 (NEMP1) from Pongo abelii (Sumatran orangutan).